We begin with the raw amino-acid sequence, 215 residues long: Ribose-5-phosphate isomerase A (215 aa).

Residues 26–29, 79–82, and 92–95 each bind substrate; these read TGST, DGAD, and KGGG. Glutamate 101 acts as the Proton acceptor in catalysis. Lysine 119 provides a ligand contact to substrate.

Belongs to the ribose 5-phosphate isomerase family. As to quaternary structure, homodimer.

The enzyme catalyses aldehydo-D-ribose 5-phosphate = D-ribulose 5-phosphate. It participates in carbohydrate degradation; pentose phosphate pathway; D-ribose 5-phosphate from D-ribulose 5-phosphate (non-oxidative stage): step 1/1. Its function is as follows. Catalyzes the reversible conversion of ribose-5-phosphate to ribulose 5-phosphate. The chain is Ribose-5-phosphate isomerase A from Stenotrophomonas maltophilia (strain R551-3).